The chain runs to 218 residues: ER lumen protein-retaining receptor (218 aa).

The Lumenal portion of the chain corresponds to Met-1–Asn-2. A helical transmembrane segment spans residues Leu-3–Ile-23. Over Lys-24–Ser-57 the chain is Cytoplasmic. The helical transmembrane segment at Leu-58–Ile-78 threads the bilayer. The Lumenal portion of the chain corresponds to Ala-79–Lys-94. Residues Ile-95–Ile-115 traverse the membrane as a helical segment. Topologically, residues Gly-116–Glu-123 are cytoplasmic. The helical transmembrane segment at Ile-124–Leu-144 threads the bilayer. Over Gln-145–Ala-152 the chain is Lumenal. The chain crosses the membrane as a helical span at residues Leu-153–Ile-173. At Tyr-174–Lys-184 the chain is on the cytoplasmic side. Residues Ile-185 to Ala-205 form a helical membrane-spanning segment. At Lys-206–Gln-218 the chain is on the lumenal side.

It belongs to the ERD2 family.

The protein resides in the endoplasmic reticulum membrane. Required for the retention of luminal endoplasmic reticulum proteins. Determines the specificity of the luminal ER protein retention system. Also required for normal vesicular traffic through the Golgi. The sequence is that of ER lumen protein-retaining receptor (kdelr) from Dictyostelium discoideum (Social amoeba).